The primary structure comprises 248 residues: Type III pantothenate kinase (248 aa).

6–13 serves as a coordination point for ATP; it reads ELGNSQLK. Substrate contacts are provided by residues Tyr94 and 101–104; that span reads GVDR. Asp103 serves as the catalytic Proton acceptor. Residue Asp123 participates in K(+) binding. Thr126 contacts ATP. Thr179 is a binding site for substrate.

It belongs to the type III pantothenate kinase family. In terms of assembly, homodimer. NH4(+) serves as cofactor. It depends on K(+) as a cofactor.

Its subcellular location is the cytoplasm. The enzyme catalyses (R)-pantothenate + ATP = (R)-4'-phosphopantothenate + ADP + H(+). Its pathway is cofactor biosynthesis; coenzyme A biosynthesis; CoA from (R)-pantothenate: step 1/5. Catalyzes the phosphorylation of pantothenate (Pan), the first step in CoA biosynthesis. The polypeptide is Type III pantothenate kinase (Hydrogenovibrio crunogenus (strain DSM 25203 / XCL-2) (Thiomicrospira crunogena)).